The primary structure comprises 356 residues: Arginine kinase (356 aa).

Positions 8 to 91 (EKLEAGFKKL…FDPIIEDYHG (84 aa)) constitute a Phosphagen kinase N-terminal domain. 64–68 (GVGIY) is a binding site for substrate. Positions 119-356 (YVISTRVRCG…LELIKIEGSL (238 aa)) constitute a Phosphagen kinase C-terminal domain. Residues 122 to 126 (STRVR) and H185 contribute to the ATP site. Residue E225 participates in substrate binding. R229 serves as a coordination point for ATP. C271 is a binding site for substrate. ATP contacts are provided by residues 280-284 (RASVH) and 309-314 (RGSTGE). Position 314 (E314) interacts with substrate.

This sequence belongs to the ATP:guanido phosphotransferase family.

The catalysed reaction is L-arginine + ATP = N(omega)-phospho-L-arginine + ADP + H(+). In Schistocerca americana (American grasshopper), this protein is Arginine kinase (ARGK).